The chain runs to 338 residues: Formamidase (338 aa).

Residues leucine 14–proline 260 form the CN hydrolase domain. Residue glutamate 60 is the Proton acceptor of the active site. The active-site Proton donor is the lysine 133. Cysteine 166 functions as the Nucleophile in the catalytic mechanism.

The protein belongs to the carbon-nitrogen hydrolase superfamily. Aliphatic amidase family.

It carries out the reaction formamide + H2O = formate + NH4(+). Functionally, is an aliphatic amidase with a restricted substrate specificity, as it only hydrolyzes formamide. The sequence is that of Formamidase from Photorhabdus laumondii subsp. laumondii (strain DSM 15139 / CIP 105565 / TT01) (Photorhabdus luminescens subsp. laumondii).